Reading from the N-terminus, the 1033-residue chain is MTARMISICGLVMALMMASVLASSSRFQRVPQSQSVVENESVKFECESTDSYSELHYDWLHNGHRIAYDKRVHQIGSNLHIEAVRRTEDVGNYVCIATNLASGAREASPPAKLSVIYLESASVQLLGSNRNELLLKCHVEGASGDLEPLEIEWYRNSEKLSTWKNVQLDQHRLIIRQPGSEDDGLYRCTASNAAGRVMSKQGYVYQSSVKCLPRLPRRKNEKMMESWDKQTFLCRGKRGGAAGLEALPAAPEDLRIVQGPIGQSIIKEGEPTALTCLYELPDELKNQRIQLRWRKDGKLLRQVELGGSAPIPGHSFDSGKDALLREDARLVLHKQNGTLSFASIIASDAGQYQCQLQLEAHAPINSSPGILEVIEQLKFVPQPTSKNLELDAVVAKVHCKAQGTPTPQVQWVRDGENTTLPDHVEVDANGTLIFRNVNSEHRGNYTCLATNSQGQINATVAINVVVTPKFSVPPVGPIETSEQGTVVMHCQAIGDPKPTIQWDKDLKYLSENNTDRERFRFLENGTLEIRNVQVEDEGSYGCTIGNSAGLKREDVQLVVKTTGDGFAPEESGGDGFLVTRAVLITMTVALAYIVLVVGLMLWCRYRRQARKARLNDLSTKEAGGDQPDVAGNGKGSEQEPCLSKQHNGHSKSRSKSSGDAQKSDDTACSQQSRASKKSAHIYEQLALPRSGLSELIQIGRGEFGDVFVGKLKATLVTSPSDKDADTEKQHSNSENGSGGSGSGSTTLSTLNEKRRSKTSMDDIEEIKEEEQDQHNQSGLEQLVLVKALNKVKDEQACQEFRRQLDLLRAISHKGVVRLFGLCREKDPHYMVLEYTDWGDLKQFLLATAGKVNTATAGSSSPPPLTTSQVLAVAYQIARGMDAIYRARFTHRDLATRNCVISSEFIVKVSYPALCKDKYSREYHKHRNTLLPIRWLAPECIQEDEYTTKSDIFAYGVVVWELFNQATKLPHEELTNEQVVQRSQAGSLEWSVAEATPDSLREILLSCWVSNPKERPSFSQLGAALSKAMQSAEK.

Positions 1-22 (MTARMISICGLVMALMMASVLA) are cleaved as a signal peptide. The Extracellular portion of the chain corresponds to 23–581 (SSSRFQRVPQ…GGDGFLVTRA (559 aa)). Ig-like C2-type domains are found at residues 25-114 (SRFQ…AKLS), 113-199 (LSVI…RVMS), 251-365 (PEDL…APIN), 368-463 (PGIL…VAIN), and 468-558 (PKFS…VQLV). N-linked (GlcNAc...) asparagine glycosylation is present at asparagine 39. Disulfide bonds link cysteine 46–cysteine 95, cysteine 137–cysteine 188, cysteine 276–cysteine 354, and cysteine 399–cysteine 447. N-linked (GlcNAc...) asparagine glycosylation is found at asparagine 336, asparagine 417, asparagine 429, asparagine 444, asparagine 457, asparagine 512, and asparagine 524. Residues cysteine 490 and cysteine 542 are joined by a disulfide bond. Residues 582–602 (VLITMTVALAYIVLVVGLMLW) form a helical membrane-spanning segment. The Cytoplasmic segment spans residues 603 to 1033 (CRYRRQARKA…LSKAMQSAEK (431 aa)). Disordered regions lie at residues 617–679 (LSTK…KKSA) and 718–760 (SPSD…KTSM). A compositionally biased stretch (polar residues) spans 655 to 673 (KSSGDAQKSDDTACSQQSR). Serine 678 carries the phosphoserine modification. The region spanning 692 to 1028 (LSELIQIGRG…QLGAALSKAM (337 aa)) is the Protein kinase; inactive domain. Residues 720 to 731 (SDKDADTEKQHS) are compositionally biased toward basic and acidic residues.

Belongs to the protein kinase superfamily. Tyr protein kinase family. Insulin receptor subfamily. In terms of assembly, interacts with plexA; component of a receptor complex that mediates the repulsive signaling in response to Semaphorin ligands. As to expression, dynamically expressed during embryogenesis in several areas of the developing nervous system, including neurons and fasciculating axons. Expression in stage 7 embryos is seen in the anterior midgut primordia, cephalic furrow and along the germinal band. At stage 11, expression is in 15 stripes over the trunk region, and in the anterior and posterior midgut primordia. Stage 12 shows expression in the developing nervous system, procephalic lobe and maxillar bud. Stage 13 shows expression in the ventral cord, maxillar segment and in three regions of the gut. At stage 16 expression is preferentially detected throughout the nervous system, including the neuromers in the ventral cord and the supraesophageal ganglion (at protein level). In larva, expression is seen in developing R cells and is localized predominantly to R1-R6 growth cones.

It is found in the cell membrane. Its function is as follows. Acts as a calcium-dependent, homophilic cell adhesion molecule that regulates neural recognition during the development of the nervous system. Component of the repulsive Plexin signaling response to regulate motor axon guidance at the embryonic stage. Also component of a receptor complex that is required in the adult visual system to innervate the lamina layer; specific targeting of R1-R6 axons. This is Tyrosine-protein kinase-like otk from Drosophila melanogaster (Fruit fly).